A 340-amino-acid polypeptide reads, in one-letter code: MRLLERARKEWFMVGIVVAIGAAKLEPSVGVNGGPLKPEITVSYIAVATIFFNSGLSLKTEELTSALVHLRLHLFIQIFTLAFFPAAIWLFLQLLSVTSINEWLLKGLQTVGCMPPPVSSAVILTKAVGGNEAAAIFNSAFGSFLGIVVTPVLLLLFLGSSSSVPFTSIFSQLFMTVVVPLVIGQIVRRYIKDWLERKKPPFGVVSSSVLLMIIYTTFCDTFSNPNIDLDKFSLILILFIIVSVQLSFMLLTFIFSTRNNSGFTPADTVAIIFCSTHKSLTLGIPMLKIVFAGHEHLSLISVPLLIYHPAQILLGSVLVPTIKSWMVSRQKGVKLTRPTV.

Topologically, residues 1–10 are cytoplasmic; that stretch reads MRLLERARKE. A helical transmembrane segment spans residues 11–31; the sequence is WFMVGIVVAIGAAKLEPSVGV. Residues 32–37 lie on the Extracellular side of the membrane; the sequence is NGGPLK. The helical transmembrane segment at 38–58 threads the bilayer; it reads PEITVSYIAVATIFFNSGLSL. At 59–71 the chain is on the cytoplasmic side; it reads KTEELTSALVHLR. The chain crosses the membrane as a helical span at residues 72-92; sequence LHLFIQIFTLAFFPAAIWLFL. Residues 93 to 116 are Extracellular-facing; the sequence is QLLSVTSINEWLLKGLQTVGCMPP. Residues 117-137 form a helical membrane-spanning segment; sequence PVSSAVILTKAVGGNEAAAIF. Position 138 (asparagine 138) is a topological domain, cytoplasmic. Residues 139–159 traverse the membrane as a helical segment; it reads SAFGSFLGIVVTPVLLLLFLG. The Extracellular portion of the chain corresponds to 160 to 163; the sequence is SSSS. The chain crosses the membrane as a helical span at residues 164–184; the sequence is VPFTSIFSQLFMTVVVPLVIG. Topologically, residues 185-201 are cytoplasmic; the sequence is QIVRRYIKDWLERKKPP. Residues 202–222 traverse the membrane as a helical segment; the sequence is FGVVSSSVLLMIIYTTFCDTF. Topologically, residues 223–234 are extracellular; that stretch reads SNPNIDLDKFSL. A helical membrane pass occupies residues 235-255; that stretch reads ILILFIIVSVQLSFMLLTFIF. The Cytoplasmic segment spans residues 256 to 270; it reads STRNNSGFTPADTVA. Residues 271–291 traverse the membrane as a helical segment; sequence IIFCSTHKSLTLGIPMLKIVF. Residues 292–298 are Extracellular-facing; it reads AGHEHLS. Residues 299–319 traverse the membrane as a helical segment; it reads LISVPLLIYHPAQILLGSVLV. At 320 to 340 the chain is on the cytoplasmic side; it reads PTIKSWMVSRQKGVKLTRPTV.

Belongs to the bile acid:sodium symporter (BASS) (TC 2.A.28) family. As to expression, expressed in heart, brain, colon, lung, liver, adrenal gland, stomach and ovary. Also expressed weakly in small intestine. Expressed in skeletal tissues.

Its subcellular location is the cell membrane. The protein localises to the endoplasmic reticulum membrane. It localises to the golgi apparatus membrane. Involved in teeth and skeletal development. Has an essential role in the biosynthesis and trafficking of glycosaminoglycans and glycoproteins to produce a proper functioning extracellular matrix. Required for extracellular matrix mineralization. Also involved in the regulation of cellular calcium homeostasis. Does not show transport activity towards bile acids or steroid sulfates (including taurocholate, cholate, chenodeoxycholate, estrone-3-sulfate, dehydroepiandrosterone sulfate (DHEAS) and pregnenolone sulfate). The protein is Sodium/bile acid cotransporter 7 (Slc10a7) of Mus musculus (Mouse).